The sequence spans 806 residues: NADH-quinone oxidoreductase subunit G (806 aa).

Residues 15–93 (EMVTLTIDGV…DMVVRTQLTS (79 aa)) enclose the 2Fe-2S ferredoxin-type domain. 4 residues coordinate [2Fe-2S] cluster: C49, C60, C63, and C77. One can recognise a 4Fe-4S His(Cys)3-ligated-type domain in the interval 95 to 134 (IADKAQHGVMELLLINHPLDCPMCDKGGECPLQNQAMSNG). [4Fe-4S] cluster is bound by residues H111, C115, C118, C124, C164, C167, C170, C214, C240, C243, C247, and C275. One can recognise a 4Fe-4S Mo/W bis-MGD-type domain in the interval 233 to 289 (LVSSPSVCEHCASGCAQRTDHRRGKVLRRLAGDDPEVNEEWNCDKGRWAFTYATQPD).

Belongs to the complex I 75 kDa subunit family. The cofactor is [2Fe-2S] cluster. Requires [4Fe-4S] cluster as cofactor.

It carries out the reaction a quinone + NADH + 5 H(+)(in) = a quinol + NAD(+) + 4 H(+)(out). NDH-1 shuttles electrons from NADH, via FMN and iron-sulfur (Fe-S) centers, to quinones in the respiratory chain. The immediate electron acceptor for the enzyme in this species is believed to be menaquinone. Couples the redox reaction to proton translocation (for every two electrons transferred, four hydrogen ions are translocated across the cytoplasmic membrane), and thus conserves the redox energy in a proton gradient. The chain is NADH-quinone oxidoreductase subunit G (nuoG) from Mycobacterium bovis (strain ATCC BAA-935 / AF2122/97).